Here is a 192-residue protein sequence, read N- to C-terminus: Adenylate kinase (192 aa).

Gly-10–Thr-18 provides a ligand contact to ATP.

It belongs to the archaeal adenylate kinase family. As to quaternary structure, monomer.

The protein localises to the cytoplasm. It catalyses the reaction AMP + ATP = 2 ADP. This Methanotorris igneus (Methanococcus igneus) protein is Adenylate kinase (adkA).